The chain runs to 366 residues: Ferredoxin--NADP reductase, leaf isozyme 2, chloroplastic (366 aa).

The transit peptide at 1–48 (MAAVNTVSSLPCSKAGAAVAGGAPRPSTCSVFYPPRCWSKRSSGNGVR) directs the protein to the chloroplast. Residues 87–209 (KEPYTGRCLL…TGPVGKEMLM (123 aa)) form the FAD-binding FR-type domain. FAD-binding positions include 145–148 (RLYS), 166–168 (CVK), Tyr-172, and 183–185 (VCS). NADP(+) is bound by residues Ser-148 and Lys-168. Residues Cys-184 and Cys-189 are joined by a disulfide bond. At Ser-185 the chain carries Phosphoserine. Thr-216 is modified (phosphothreonine). Thr-224 is a binding site for FAD. Residues Thr-224, 256 to 257 (VP), 286 to 287 (SR), Lys-296, 325 to 326 (GL), and Glu-364 contribute to the NADP(+) site.

Belongs to the ferredoxin--NADP reductase type 1 family. Heterodimer with LFNR1. Component of high molecular weight thylakoid LFNRs-containing protein complexes containing LIR1, LFNR1, LFNR2, TIC62 and TROL proteins. Interacts directly with LFNR1 and LFNR2; LIR1 increases the affinity of LFNR1 and LFNR2 for TIC62 and subsequent thylakoid relocalization. Requires FAD as cofactor. Post-translationally, may form interchain disulfide bonds with LIR1.

It is found in the plastid. The protein resides in the chloroplast stroma. It localises to the chloroplast thylakoid membrane. The enzyme catalyses 2 reduced [2Fe-2S]-[ferredoxin] + NADP(+) + H(+) = 2 oxidized [2Fe-2S]-[ferredoxin] + NADPH. Its pathway is energy metabolism; photosynthesis. Plays a key role in regulating the relative amounts of cyclic and non-cyclic electron flow to meet the demands of the plant for ATP and reducing power. This chain is Ferredoxin--NADP reductase, leaf isozyme 2, chloroplastic, found in Oryza sativa subsp. indica (Rice).